The sequence spans 138 residues: Ribosome-binding factor A (138 aa).

The tract at residues 112-138 is disordered; it reads EARTQGQAPAADVEPAPGAAPDDEAEE. Over residues 119–131 the composition is skewed to low complexity; that stretch reads APAADVEPAPGAA.

The protein belongs to the RbfA family. In terms of assembly, monomer. Binds 30S ribosomal subunits, but not 50S ribosomal subunits or 70S ribosomes.

The protein localises to the cytoplasm. Functionally, one of several proteins that assist in the late maturation steps of the functional core of the 30S ribosomal subunit. Associates with free 30S ribosomal subunits (but not with 30S subunits that are part of 70S ribosomes or polysomes). Required for efficient processing of 16S rRNA. May interact with the 5'-terminal helix region of 16S rRNA. This Anaeromyxobacter sp. (strain K) protein is Ribosome-binding factor A.